We begin with the raw amino-acid sequence, 188 residues long: MATVSTNEFKGGLKIMLDNEPCVILENEYVKPGKGQAFNRVRIRKLLTGKVLEKTFKSGDTAEVADVVDIDLDYLYNDGEFYHFMNNSTFEQLAADAKAVGENAKWLVENNTCMLTLWNGNPIAVTPPNFVELEVTETDPGVKGDTQGTGGKPATLSTGAVVRVPLFVQIGEVIKVDTRSAEYVGRVK.

K34 is modified (N6-(3,6-diaminohexanoyl)-5-hydroxylysine).

Belongs to the elongation factor P family. May be beta-lysylated on the epsilon-amino group of Lys-34 by the combined action of EpmA and EpmB, and then hydroxylated on the C5 position of the same residue by EpmC (if this protein is present). Lysylation is critical for the stimulatory effect of EF-P on peptide-bond formation. The lysylation moiety may extend toward the peptidyltransferase center and stabilize the terminal 3-CCA end of the tRNA. Hydroxylation of the C5 position on Lys-34 may allow additional potential stabilizing hydrogen-bond interactions with the P-tRNA.

The protein localises to the cytoplasm. Its pathway is protein biosynthesis; polypeptide chain elongation. Its function is as follows. Involved in peptide bond synthesis. Alleviates ribosome stalling that occurs when 3 or more consecutive Pro residues or the sequence PPG is present in a protein, possibly by augmenting the peptidyl transferase activity of the ribosome. Modification of Lys-34 is required for alleviation. This is Elongation factor P from Vibrio cholerae serotype O1 (strain ATCC 39541 / Classical Ogawa 395 / O395).